A 156-amino-acid polypeptide reads, in one-letter code: Ribosome maturation factor RimP (156 aa).

The protein belongs to the RimP family.

It is found in the cytoplasm. Functionally, required for maturation of 30S ribosomal subunits. This is Ribosome maturation factor RimP from Dictyoglomus thermophilum (strain ATCC 35947 / DSM 3960 / H-6-12).